Reading from the N-terminus, the 324-residue chain is CYFIP-related Rac1 interactor B (324 aa).

The N-myristoyl glycine moiety is linked to residue glycine 2. Lysine 74 participates in a covalent cross-link: Glycyl lysine isopeptide (Lys-Gly) (interchain with G-Cter in ubiquitin).

It belongs to the CYRI family. Interacts with RAC1 (GTP-bound form preferentially). In terms of processing, ubiquitinated at Lys-74 upon Salmonella bacterial infection.

The protein localises to the membrane. The protein resides in the mitochondrion. Negatively regulates RAC1 signaling and RAC1-driven cytoskeletal remodeling. Regulates chemotaxis, cell migration and epithelial polarization by controlling the polarity, plasticity, duration and extent of protrusions. Limits Rac1 mediated activation of the Scar/WAVE complex, focuses protrusion signals and regulates pseudopod complexity by inhibiting Scar/WAVE-induced actin polymerization. Protects against Salmonella bacterial infection. Attenuates processes such as macropinocytosis, phagocytosis and cell migration and restrict sopE-mediated bacterial entry. Also restricts infection mediated by Mycobacterium tuberculosis and Listeria monocytogenes. Involved in the regulation of mitochondrial dynamics and oxidative stress. In Homo sapiens (Human), this protein is CYFIP-related Rac1 interactor B.